The following is a 347-amino-acid chain: NADH-ubiquinone oxidoreductase chain 2 (347 aa).

Transmembrane regions (helical) follow at residues 1 to 21 (MNPL…VIVM), 25 to 45 (HWLT…PMLM), 59 to 79 (YFLT…INLT), 96 to 116 (IIMT…FWVP), 127 to 147 (CLIL…MISP), 149 to 169 (INLN…GWGG), 178 to 198 (IMAY…AYNP), 200 to 220 (MTML…MLLI), 237 to 257 (IPLV…LPPL), 276 to 296 (IILP…YMRL), and 325 to 345 (LLSP…TMLL).

Belongs to the complex I subunit 2 family. Core subunit of respiratory chain NADH dehydrogenase (Complex I) which is composed of 45 different subunits. Interacts with TMEM242.

The protein resides in the mitochondrion inner membrane. The enzyme catalyses a ubiquinone + NADH + 5 H(+)(in) = a ubiquinol + NAD(+) + 4 H(+)(out). Core subunit of the mitochondrial membrane respiratory chain NADH dehydrogenase (Complex I) which catalyzes electron transfer from NADH through the respiratory chain, using ubiquinone as an electron acceptor. Essential for the catalytic activity and assembly of complex I. The sequence is that of NADH-ubiquinone oxidoreductase chain 2 from Natalus tumidirostris (Trinidadian funnel-eared bat).